Here is a 311-residue protein sequence, read N- to C-terminus: Malate dehydrogenase (311 aa).

Residues 7–13 and D34 each bind NAD(+); that span reads GAAGGIG. Substrate-binding residues include R81 and R87. NAD(+) contacts are provided by residues N94 and 117 to 119; that span reads ITN. Substrate is bound by residues N119 and R153. H177 serves as the catalytic Proton acceptor. Residue M227 coordinates NAD(+).

It belongs to the LDH/MDH superfamily. MDH type 1 family. As to quaternary structure, homodimer.

The catalysed reaction is (S)-malate + NAD(+) = oxaloacetate + NADH + H(+). Catalyzes the reversible oxidation of malate to oxaloacetate. In Aliivibrio fischeri (strain MJ11) (Vibrio fischeri), this protein is Malate dehydrogenase.